The primary structure comprises 688 residues: Polyphosphate kinase (688 aa).

N45 serves as a coordination point for ATP. Mg(2+) contacts are provided by R375 and R405. Residues 430 to 464 enclose the PLD phosphodiesterase domain; that stretch reads PGLKIHAKLFLISRKEGDDVVRYAHIGTGNFNEKT. H435 acts as the Phosphohistidine intermediate in catalysis. Residues Y468, R564, and H592 each contribute to the ATP site.

This sequence belongs to the polyphosphate kinase 1 (PPK1) family. The cofactor is Mg(2+). Post-translationally, an intermediate of this reaction is the autophosphorylated ppk in which a phosphate is covalently linked to a histidine residue through a N-P bond.

The catalysed reaction is [phosphate](n) + ATP = [phosphate](n+1) + ADP. Functionally, catalyzes the reversible transfer of the terminal phosphate of ATP to form a long-chain polyphosphate (polyP). This is Polyphosphate kinase from Salmonella typhimurium (strain LT2 / SGSC1412 / ATCC 700720).